We begin with the raw amino-acid sequence, 339 residues long: DNA-directed RNA polymerase subunit alpha (339 aa).

The alpha N-terminal domain (alpha-NTD) stretch occupies residues 1-233 (MVREEVAGST…DLFLPFLHAE (233 aa)). The interval 264–339 (KKGIPLNCIF…IDLLKNKLSF (76 aa)) is alpha C-terminal domain (alpha-CTD).

Belongs to the RNA polymerase alpha chain family. In terms of assembly, in plastids the minimal PEP RNA polymerase catalytic core is composed of four subunits: alpha, beta, beta', and beta''. When a (nuclear-encoded) sigma factor is associated with the core the holoenzyme is formed, which can initiate transcription.

Its subcellular location is the plastid. It is found in the chloroplast. The enzyme catalyses RNA(n) + a ribonucleoside 5'-triphosphate = RNA(n+1) + diphosphate. In terms of biological role, DNA-dependent RNA polymerase catalyzes the transcription of DNA into RNA using the four ribonucleoside triphosphates as substrates. This is DNA-directed RNA polymerase subunit alpha from Elymus californicus (California bottlebrush grass).